Here is a 198-residue protein sequence, read N- to C-terminus: Glycerol-3-phosphate acyltransferase (198 aa).

The next 4 membrane-spanning stretches (helical) occupy residues 4–24, 71–91, 113–133, and 147–167; these read TYLLFIVAYLLGSIPFALVVG, LPMIFGLDIHPLWFGLAAVLG, LLCYSPVVFAILAVVFFTLLF, and VVAVIASIVSGDKIFIIAMCL.

Belongs to the PlsY family. In terms of assembly, probably interacts with PlsX.

It is found in the cell membrane. The catalysed reaction is an acyl phosphate + sn-glycerol 3-phosphate = a 1-acyl-sn-glycero-3-phosphate + phosphate. The protein operates within lipid metabolism; phospholipid metabolism. Functionally, catalyzes the transfer of an acyl group from acyl-phosphate (acyl-PO(4)) to glycerol-3-phosphate (G3P) to form lysophosphatidic acid (LPA). This enzyme utilizes acyl-phosphate as fatty acyl donor, but not acyl-CoA or acyl-ACP. The sequence is that of Glycerol-3-phosphate acyltransferase from Bacillus cereus (strain G9842).